Here is a 2194-residue protein sequence, read N- to C-terminus: Genome polyprotein (2194 aa).

Positions 1 to 20 (MGAQVSRQQTGTHENANVAT) are disordered. The N-myristoyl glycine; by host moiety is linked to residue G2. Residues 2 to 1509 (GAQVSRQQTG…HISRAFIALQ (1508 aa)) are Cytoplasmic-facing. Residues 558-574 (LPEQAATTQIGEIVKTV) form an amphipathic alpha-helix region. Residues H885 and D903 each act as for protease 2A activity in the active site. C920 and C922 together coordinate Zn(2+). C974 functions as the For protease 2A activity in the catalytic mechanism. Zn(2+) is bound by residues C980 and H982. Residues 1114 to 1186 (SDSWLKKFTE…EHSCPNSEXQ (73 aa)) are membrane-binding. The tract at residues 1114–1252 (SDSWLKKFTE…SPGTGKSVAS (139 aa)) is oligomerization. The tract at residues 1135–1139 (AQKID) is RNA-binding. The region spanning 1218 to 1374 (ERKINNYIQF…ESYKDGVRLD (157 aa)) is the SF3 helicase domain. ATP is bound at residue 1242–1249 (GSPGTGKS). Residues C1382, C1395, and C1400 each coordinate Zn(2+). The C4-type; degenerate zinc finger occupies 1382–1400 (CNPEKCRPTNYKKCCPLIC). Residues 1427–1434 (EYRIRNST) are RNA-binding. Residues 1438-1443 (LEALFQ) are oligomerization. An intramembrane segment occupies 1510–1525 (AITTFVSIAGVVYVIY). Residues 1526-2194 (KLFAGIQGPY…SLRRKWLDSF (669 aa)) lie on the Cytoplasmic side of the membrane. Y1535 carries the post-translational modification O-(5'-phospho-RNA)-tyrosine. A Peptidase C3 domain is found at 1555-1733 (GPSLDFAQAI…FAAMLLQNYF (179 aa)). Active-site for protease 3C activity residues include H1594, E1625, and C1701. The RdRp catalytic domain maps to 1960–2075 (GKIFAFDYTG…SYPHEIDPGL (116 aa)). Mg(2+) is bound by residues D1966 and D2061.

This sequence belongs to the picornaviruses polyprotein family. In terms of assembly, interacts with capsid protein VP1 and capsid protein VP3 to form heterotrimeric protomers. As to quaternary structure, interacts with capsid protein VP0, and capsid protein VP3 to form heterotrimeric protomers. Five protomers subsequently associate to form pentamers which serve as building blocks for the capsid. Interacts with capsid protein VP2, capsid protein VP3 and capsid protein VP4 following cleavage of capsid protein VP0. Interacts with capsid protein VP1 and capsid protein VP3 in the mature capsid. In terms of assembly, interacts with capsid protein VP0 and capsid protein VP1 to form heterotrimeric protomers. Five protomers subsequently associate to form pentamers which serve as building blocks for the capsid. Interacts with capsid protein VP4 in the mature capsid. Interacts with protein 2C; this interaction may be important for virion morphogenesis. As to quaternary structure, interacts with capsid protein VP1 and capsid protein VP3. Homodimer. In terms of assembly, homohexamer; forms a hexameric ring structure with 6-fold symmetry characteristic of AAA+ ATPases. Interacts (via N-terminus) with host RTN3 (via reticulon domain); this interaction is important for viral replication. Interacts with capsid protein VP3; this interaction may be important for virion morphogenesis. As to quaternary structure, interacts with protein 3CD. Homodimer. Interacts with host GBF1. Interacts (via GOLD domain) with host ACBD3 (via GOLD domain); this interaction allows the formation of a viral protein 3A/ACBD3 heterotetramer with a 2:2 stoichiometry, which will stimulate the recruitment of host PI4KB in order to synthesize PI4P at the viral RNA replication sites. In terms of assembly, interacts with RNA-directed RNA polymerase. As to quaternary structure, interacts with protein 3AB and with RNA-directed RNA polymerase. Interacts with Viral protein genome-linked and with protein 3CD. Mg(2+) serves as cofactor. Specific enzymatic cleavages in vivo by the viral proteases yield processing intermediates and the mature proteins. Post-translationally, myristoylation is required for the formation of pentamers during virus assembly. Further assembly of 12 pentamers and a molecule of genomic RNA generates the provirion. In terms of processing, during virion maturation, immature virions are rendered infectious following cleavage of VP0 into VP4 and VP2. This maturation seems to be an autocatalytic event triggered by the presence of RNA in the capsid and it is followed by a conformational change infectious virion. Myristoylation is required during RNA encapsidation and formation of the mature virus particle. Post-translationally, VPg is uridylylated by the polymerase into VPg-pUpU. This acts as a nucleotide-peptide primer for the genomic RNA replication.

It localises to the virion. Its subcellular location is the host cytoplasm. The protein localises to the host cytoplasmic vesicle membrane. It is found in the host nucleus. The catalysed reaction is a ribonucleoside 5'-triphosphate + H2O = a ribonucleoside 5'-diphosphate + phosphate + H(+). The enzyme catalyses Selective cleavage of Tyr-|-Gly bond in the picornavirus polyprotein.. It catalyses the reaction RNA(n) + a ribonucleoside 5'-triphosphate = RNA(n+1) + diphosphate. It carries out the reaction Selective cleavage of Gln-|-Gly bond in the poliovirus polyprotein. In other picornavirus reactions Glu may be substituted for Gln, and Ser or Thr for Gly.. Replication or transcription is subject to high level of random mutations by the nucleotide analog ribavirin. Forms an icosahedral capsid of pseudo T=3 symmetry with capsid proteins VP2 and VP3. The capsid is 300 Angstroms in diameter, composed of 60 copies of each capsid protein and enclosing the viral positive strand RNA genome. Capsid protein VP1 mainly forms the vertices of the capsid. Capsid protein VP1 interacts with host cell receptor to provide virion attachment to target host cells. This attachment induces virion internalization. Tyrosine kinases are probably involved in the entry process. After binding to its receptor, the capsid undergoes conformational changes. Capsid protein VP1 N-terminus (that contains an amphipathic alpha-helix) and capsid protein VP4 are externalized. Together, they shape a pore in the host membrane through which viral genome is translocated to host cell cytoplasm. Functionally, forms an icosahedral capsid of pseudo T=3 symmetry with capsid proteins VP2 and VP3. The capsid is 300 Angstroms in diameter, composed of 60 copies of each capsid protein and enclosing the viral positive strand RNA genome. In terms of biological role, lies on the inner surface of the capsid shell. After binding to the host receptor, the capsid undergoes conformational changes. Capsid protein VP4 is released, Capsid protein VP1 N-terminus is externalized, and together, they shape a pore in the host membrane through which the viral genome is translocated into the host cell cytoplasm. Its function is as follows. Component of immature procapsids, which is cleaved into capsid proteins VP4 and VP2 after maturation. Allows the capsid to remain inactive before the maturation step. Cysteine protease that cleaves viral polyprotein and specific host proteins. It is responsible for the autocatalytic cleavage between the P1 and P2 regions, which is the first cleavage occurring in the polyprotein. Also cleaves the host translation initiation factor EIF4G1, in order to shut down the capped cellular mRNA translation. Inhibits the host nucleus-cytoplasm protein and RNA trafficking by cleaving host members of the nuclear pores. Counteracts stress granule formation probably by antagonizing its assembly or promoting its dissassembly. Functionally, plays an essential role in the virus replication cycle by acting as a viroporin. Creates a pore in the host endoplasmic reticulum and as a consequence releases Ca2+ in the cytoplasm of infected cell. In turn, high levels of cytoplasmic calcium may trigger membrane trafficking and transport of viral ER-associated proteins to viroplasms, sites of viral genome replication. In terms of biological role, induces and associates with structural rearrangements of intracellular membranes. Displays RNA-binding, nucleotide binding and NTPase activities. May play a role in virion morphogenesis and viral RNA encapsidation by interacting with the capsid protein VP3. Its function is as follows. Localizes the viral replication complex to the surface of membranous vesicles. Together with protein 3CD binds the Cis-Active RNA Element (CRE) which is involved in RNA synthesis initiation. Acts as a cofactor to stimulate the activity of 3D polymerase, maybe through a nucleid acid chaperone activity. Localizes the viral replication complex to the surface of membranous vesicles. It inhibits host cell endoplasmic reticulum-to-Golgi apparatus transport and causes the disassembly of the Golgi complex, possibly through GBF1 interaction. This would result in depletion of MHC, trail receptors and IFN receptors at the host cell surface. Plays an essential role in viral RNA replication by recruiting ACBD3 and PI4KB at the viral replication sites, thereby allowing the formation of the rearranged membranous structures where viral replication takes place. Functionally, acts as a primer for viral RNA replication and remains covalently bound to viral genomic RNA. VPg is uridylylated prior to priming replication into VPg-pUpU. The oriI viral genomic sequence may act as a template for this. The VPg-pUpU is then used as primer on the genomic RNA poly(A) by the RNA-dependent RNA polymerase to replicate the viral genome. During genome replication, the VPg-RNA linkage is removed by the host TDP2, thereby accelerating replication. During the late stage of the replication cycle, host TDP2 is excluded from sites of viral RNA synthesis and encapsidation, allowing for the generation of progeny virions. In terms of biological role, involved in the viral replication complex and viral polypeptide maturation. It exhibits protease activity with a specificity and catalytic efficiency that is different from protease 3C. Protein 3CD lacks polymerase activity. The 3C domain in the context of protein 3CD may have an RNA binding activity. Protein 3CD binds to the 5'UTR of the viral genome. Its function is as follows. Replicates the viral genomic RNA on the surface of intracellular membranes. May form linear arrays of subunits that propagate along a strong head-to-tail interaction called interface-I. Covalently attaches UMP to a tyrosine of VPg, which is used to prime RNA synthesis. The positive stranded RNA genome is first replicated at virus induced membranous vesicles, creating a dsRNA genomic replication form. This dsRNA is then used as template to synthesize positive stranded RNA genomes. ss(+)RNA genomes are either translated, replicated or encapsidated. Major viral protease that mediates proteolytic processing of the polyprotein. Cleaves host EIF5B, contributing to host translation shutoff. Also cleaves host PABPC1, contributing to host translation shutoff. Cleaves host NLRP1, triggers host N-glycine-mediated degradation of the autoinhibitory NLRP1 N-terminal fragment. The chain is Genome polyprotein from Homo sapiens (Human).